A 59-amino-acid chain; its full sequence is Large ribosomal subunit protein bL35 (59 aa).

Positions Gly-17–Lys-43 are enriched in basic residues. The tract at residues Gly-17 to Val-47 is disordered.

This sequence belongs to the bacterial ribosomal protein bL35 family.

The protein is Large ribosomal subunit protein bL35 of Mycoplasma genitalium (strain ATCC 33530 / DSM 19775 / NCTC 10195 / G37) (Mycoplasmoides genitalium).